Reading from the N-terminus, the 346-residue chain is C5a anaphylatoxin chemotactic receptor 1 (346 aa).

The Extracellular segment spans residues 1–33 (MDDNNSDWTSYDFGNDTIPSPNEISLSHIGTRH). N-linked (GlcNAc...) asparagine glycans are attached at residues Asn-4 and Asn-15. Residues 34–60 (WITLVCYGIVFLLGVPGNALVVWVTGF) form a helical membrane-spanning segment. Topologically, residues 61–65 (RMPNS) are cytoplasmic. Residues 66–89 (VNAQWFLNLAIADLLCCLSLPILM) traverse the membrane as a helical segment. Over 90 to 106 (VPLAQDQHWPFGALACK) the chain is Extracellular. Cys-105 and Cys-183 are disulfide-bonded. Residues 107-128 (LFSGIFYMMMYCSVLLLVVISL) traverse the membrane as a helical segment. Residues 129–149 (DRFLLVTKPVWCQNNRQPRQA) are Cytoplasmic-facing. A helical transmembrane segment spans residues 150 to 170 (RILCFIIWILGLLGSSPYFAH). Topologically, residues 171-194 (MEIQHHSETKTVCTGSYSSLGHAW) are extracellular. Residues 195 to 220 (AITIIRSFLFFLLPFLIICISHWKVY) form a helical membrane-spanning segment. The Cytoplasmic segment spans residues 221 to 238 (HMTSSGRRQRDKSSRTLR). A helical transmembrane segment spans residues 239–261 (VILALVLGFFLCWTPLHIVDLLI). The Extracellular portion of the chain corresponds to 262–279 (LVSDQPSERFEVNLNLAH). The chain crosses the membrane as a helical span at residues 280-300 (VLTLCLAYINSCLNPLLYVCL). Residues 301–346 (GRGFKENLISSLRSVLHFASEAPTHGPSMTTNSKSTTDGVFREKPV) lie on the Cytoplasmic side of the membrane. The segment at 323-346 (PTHGPSMTTNSKSTTDGVFREKPV) is disordered. Residues 327–338 (PSMTTNSKSTTD) show a composition bias toward polar residues.

It belongs to the G-protein coupled receptor 1 family.

It localises to the cell membrane. Receptor for the chemotactic and inflammatory peptide anaphylatoxin C5a. This receptor stimulates chemotaxis, granule enzyme release and superoxide anion production. The chain is C5a anaphylatoxin chemotactic receptor 1 (c5ar1) from Danio rerio (Zebrafish).